Here is a 293-residue protein sequence, read N- to C-terminus: Ribosomal RNA small subunit methyltransferase H (293 aa).

S-adenosyl-L-methionine is bound by residues 31–33 (GGY), D49, F76, D97, and Q104.

Belongs to the methyltransferase superfamily. RsmH family.

It localises to the cytoplasm. It carries out the reaction cytidine(1402) in 16S rRNA + S-adenosyl-L-methionine = N(4)-methylcytidine(1402) in 16S rRNA + S-adenosyl-L-homocysteine + H(+). Its function is as follows. Specifically methylates the N4 position of cytidine in position 1402 (C1402) of 16S rRNA. The polypeptide is Ribosomal RNA small subunit methyltransferase H (Wolbachia sp. subsp. Drosophila simulans (strain wRi)).